The chain runs to 585 residues: A-type ATP synthase subunit A (585 aa).

231–238 lines the ATP pocket; sequence GPFGSGKT.

It belongs to the ATPase alpha/beta chains family. In terms of assembly, has multiple subunits with at least A(3), B(3), C, D, E, F, H, I and proteolipid K(x).

It localises to the cell membrane. It catalyses the reaction ATP + H2O + 4 H(+)(in) = ADP + phosphate + 5 H(+)(out). Its function is as follows. Produces ATP from ADP in the presence of a proton gradient across the membrane. The archaeal alpha chain is a catalytic subunit. Component of the A-type ATP synthase that produces ATP from ADP in the presence of a proton gradient across the membrane. The A chain is the catalytic subunit. This chain is A-type ATP synthase subunit A, found in Thermococcus sp. (strain KI).